The chain runs to 1784 residues: Histone acetyltransferase KAT6B (1784 aa).

In terms of domain architecture, SAMD1-like winged helix (WH) spans 1 to 77 (MVKLANPLYT…LASYKDPDNP (77 aa)). The tract at residues 72-98 (KDPDNPGRFSSVKPGTFPKSTKESRGS) is disordered. Residues 103–176 (RNVDWNKLLR…KDGPQYRVNY (74 aa)) form the H15 domain. 2 consecutive PHD-type zinc fingers follow at residues 213–272 (IPIC…CKTC) and 269–320 (CKTC…CRPK). A Phosphoserine modification is found at serine 355. The interval 361 to 425 (GSMNAFTGRG…ECESGVEDCG (65 aa)) is negatively regulates HAT activity. A Glycyl lysine isopeptide (Lys-Gly) (interchain with G-Cter in SUMO2) cross-link involves residue lysine 381. The MYST-type HAT domain occupies 423-697 (DCGRYPSVIE…LDPDSLRWTP (275 aa)). Residues 426-716 (RYPSVIEFGK…EEEREAEKEA (291 aa)) form a catalytic region. The C2HC MYST-type zinc finger occupies 456–481 (LYLCEFCLKYMKSKNILLRHSKKCGW). An interaction with BRPF1 region spans residues 460–716 (EFCLKYMKSK…EEEREAEKEA (257 aa)). Lysine 523 bears the N6-acetyllysine; by autocatalysis mark. Acetyl-CoA is bound by residues 564–568 (SCIMI) and 573–579 (QRQGFGR). Glutamate 599 (proton donor/acceptor) is an active-site residue. Serine 603 lines the acetyl-CoA pocket. Disordered stretches follow at residues 730–884 (EQEV…RPMP), 904–1163 (RKAF…FKEV), 1195–1273 (SCNS…FQDC), and 1291–1330 (QSPQIATTLDDCQQSDHSSPVSSVHSHPGQSVRSVNSPSV). The span at 733-751 (VLSTRANSRQSPAKVQSKN) shows a compositional bias: polar residues. N6-acetyllysine occurs at positions 746, 750, and 752. Serine 756 bears the Phosphoserine mark. The span at 777–819 (SEEEEEEEEDEEEEDEEEEEEEEEDEEEEEEEEEEEEEEEEEN) shows a compositional bias: acidic residues. Residues 820–831 (IQSSPPRLTKPQ) show a composition bias toward polar residues. Residues 835–854 (IKRKRPFVLKKKRGRKRRRI) are compositionally biased toward basic residues. Over residues 856–869 (SSVTTETISETTEV) the composition is skewed to low complexity. Over residues 904–914 (RKAFQHQPGKK) the composition is skewed to basic residues. 2 stretches are compositionally biased toward basic and acidic residues: residues 938-957 (MNDDSRNLKEGSKDNPEPLK) and 1055-1064 (EKPEDDLIKP). The segment covering 1065–1087 (EEEEEEEEEEEEEEGEEEEEEGG) has biased composition (acidic residues). Basic and acidic residues-rich tracts occupy residues 1088-1101 (NVEKDPDGAKSQEK) and 1107-1118 (SPEKEDSARLDD). Positions 1119 to 1128 (HEEEEEEDEE) are enriched in acidic residues. Over residues 1144–1163 (HMESAEVEKEELPRESFKEV) the composition is skewed to basic and acidic residues. A compositionally biased stretch (acidic residues) spans 1209–1218 (AVPESDEEPP). The span at 1224 to 1240 (QKQDQKNSKEVDTEFKE) shows a compositional bias: basic and acidic residues. Composition is skewed to polar residues over residues 1251–1263 (ETVQAVQSLTQES) and 1291–1302 (QSPQIATTLDDC). An interaction with RUNX1 and RUNX2 region spans residues 1271 to 1784 (QDCAETQEAC…QSLNGSYMRR (514 aa)). The segment covering 1305-1322 (SDHSSPVSSVHSHPGQSV) has biased composition (low complexity).

It belongs to the MYST (SAS/MOZ) family. Component of the MOZ/MORF complex composed at least of ING5, KAT6A, KAT6B, MEAF6 and one of BRPF1, BRD1/BRPF2 and BRPF3. Interacts with RUNX1 and RUNX2. Autoacetylation at Lys-523 is required for proper function.

Its subcellular location is the nucleus. It catalyses the reaction L-lysyl-[protein] + acetyl-CoA = N(6)-acetyl-L-lysyl-[protein] + CoA + H(+). Its function is as follows. Histone acetyltransferase which may be involved in both positive and negative regulation of transcription. Required for RUNX2-dependent transcriptional activation. May be involved in cerebral cortex development. Component of the MOZ/MORF complex which has a histone H3 acetyltransferase activity. This is Histone acetyltransferase KAT6B (KAT6B) from Macaca fascicularis (Crab-eating macaque).